Reading from the N-terminus, the 272-residue chain is NAD kinase (272 aa).

The Proton acceptor role is filled by aspartate 50. Residues aspartate 50–glycine 51, asparagine 126–glutamate 127, arginine 152, aspartate 154, threonine 165–serine 170, and alanine 189 each bind NAD(+).

Belongs to the NAD kinase family. A divalent metal cation serves as cofactor.

The protein localises to the cytoplasm. The catalysed reaction is NAD(+) + ATP = ADP + NADP(+) + H(+). In terms of biological role, involved in the regulation of the intracellular balance of NAD and NADP, and is a key enzyme in the biosynthesis of NADP. Catalyzes specifically the phosphorylation on 2'-hydroxyl of the adenosine moiety of NAD to yield NADP. The protein is NAD kinase of Streptococcus pneumoniae serotype 19F (strain G54).